An 888-amino-acid polypeptide reads, in one-letter code: Alanine--tRNA ligase (888 aa).

Residues His-573, His-577, Cys-676, and His-680 each coordinate Zn(2+).

This sequence belongs to the class-II aminoacyl-tRNA synthetase family. Zn(2+) is required as a cofactor.

The protein localises to the cytoplasm. It catalyses the reaction tRNA(Ala) + L-alanine + ATP = L-alanyl-tRNA(Ala) + AMP + diphosphate. Its function is as follows. Catalyzes the attachment of alanine to tRNA(Ala) in a two-step reaction: alanine is first activated by ATP to form Ala-AMP and then transferred to the acceptor end of tRNA(Ala). Also edits incorrectly charged Ser-tRNA(Ala) and Gly-tRNA(Ala) via its editing domain. This is Alanine--tRNA ligase from Corynebacterium diphtheriae (strain ATCC 700971 / NCTC 13129 / Biotype gravis).